The chain runs to 360 residues: Aminomethyltransferase (360 aa).

Belongs to the GcvT family. In terms of assembly, the glycine cleavage system is composed of four proteins: P, T, L and H.

The enzyme catalyses N(6)-[(R)-S(8)-aminomethyldihydrolipoyl]-L-lysyl-[protein] + (6S)-5,6,7,8-tetrahydrofolate = N(6)-[(R)-dihydrolipoyl]-L-lysyl-[protein] + (6R)-5,10-methylene-5,6,7,8-tetrahydrofolate + NH4(+). In terms of biological role, the glycine cleavage system catalyzes the degradation of glycine. The protein is Aminomethyltransferase of Pseudomonas syringae pv. tomato (strain ATCC BAA-871 / DC3000).